The sequence spans 169 residues: Thermonuclease (169 aa).

Positions 1–26 are cleaved as a signal peptide; sequence MKKITTGLIIVVAAIIVLSIQFMTES. Catalysis depends on residues Arg-65, Glu-73, and Arg-115.

Belongs to the thermonuclease family. Requires Ca(2+) as cofactor.

The protein resides in the secreted. It catalyses the reaction Endonucleolytic cleavage to nucleoside 3'-phosphates and 3'-phosphooligonucleotide end-products.. Enzyme that catalyzes the hydrolysis of both DNA and RNA at the 5'-position of the phosphodiester bond. This is Thermonuclease (nucH) from Staphylococcus hyicus.